A 123-amino-acid polypeptide reads, in one-letter code: Large ribosomal subunit protein eL8 (123 aa).

The protein belongs to the eukaryotic ribosomal protein eL8 family. As to quaternary structure, part of the 50S ribosomal subunit. Probably part of the RNase P complex.

It is found in the cytoplasm. Functionally, multifunctional RNA-binding protein that recognizes the K-turn motif in ribosomal RNA, the RNA component of RNase P, box H/ACA, box C/D and box C'/D' sRNAs. This is Large ribosomal subunit protein eL8 from Methanosphaera stadtmanae (strain ATCC 43021 / DSM 3091 / JCM 11832 / MCB-3).